The following is a 1046-amino-acid chain: Inner tegument protein (1046 aa).

The interaction with large tegument protein stretch occupies residues 543–1046 (WGIVPPDESN…TGRRANGDNA (504 aa)).

Belongs to the herpesviridae inner tegument protein family. Interacts (via C-terminus) with the large tegument protein/LTP (via N-terminus).

The protein resides in the virion tegument. Its subcellular location is the host cytoplasm. It is found in the host nucleus. It localises to the host Golgi apparatus. The protein localises to the host trans-Golgi network. In terms of biological role, plays an essential role in cytoplasmic secondary envelopment during viral egress. Interacts with the capsid via the large tegument protein/LTP and participates in its transport to the host trans-Golgi network (TGN) where secondary envelopment occurs. Modulates tegumentation and capsid accumulation at the viral assembly complex. The sequence is that of Inner tegument protein (MDV050) from Gallid herpesvirus 2 (strain Chicken/Md5/ATCC VR-987) (GaHV-2).